A 197-amino-acid chain; its full sequence is MMITPTGDGPWLVAGLGNPGPTYAGNRHNAGFMVVDLLAERTGSRLKSHRSRADVAETRLAGARAVLARPLSFMNLSGGPVAAARSFYKVEVSRLIVVHDELDIPFGAVRLKRGGGDNGHNGLRSISSALGTRDYLRVRVGIGRPPGRMDPADFVLRDFTSTERRELPLLLEHAADSVEMLIADGLEPAQNRYHALL.

A tRNA-binding site is contributed by Tyr23. Catalysis depends on His28, which acts as the Proton acceptor. Phe73, Asn75, and Asn121 together coordinate tRNA.

It belongs to the PTH family. Monomer.

The protein localises to the cytoplasm. It carries out the reaction an N-acyl-L-alpha-aminoacyl-tRNA + H2O = an N-acyl-L-amino acid + a tRNA + H(+). Its function is as follows. Hydrolyzes ribosome-free peptidyl-tRNAs (with 1 or more amino acids incorporated), which drop off the ribosome during protein synthesis, or as a result of ribosome stalling. In terms of biological role, catalyzes the release of premature peptidyl moieties from peptidyl-tRNA molecules trapped in stalled 50S ribosomal subunits, and thus maintains levels of free tRNAs and 50S ribosomes. The protein is Peptidyl-tRNA hydrolase of Frankia casuarinae (strain DSM 45818 / CECT 9043 / HFP020203 / CcI3).